The primary structure comprises 296 residues: Acetyl-coenzyme A carboxylase carboxyl transferase subunit beta (296 aa).

The 270-residue stretch at valine 25 to glutamate 294 folds into the CoA carboxyltransferase N-terminal domain. Zn(2+) contacts are provided by cysteine 29, cysteine 32, cysteine 48, and cysteine 51. A C4-type zinc finger spans residues cysteine 29–cysteine 51.

It belongs to the AccD/PCCB family. As to quaternary structure, acetyl-CoA carboxylase is a heterohexamer composed of biotin carboxyl carrier protein (AccB), biotin carboxylase (AccC) and two subunits each of ACCase subunit alpha (AccA) and ACCase subunit beta (AccD). Zn(2+) is required as a cofactor.

The protein resides in the cytoplasm. The catalysed reaction is N(6)-carboxybiotinyl-L-lysyl-[protein] + acetyl-CoA = N(6)-biotinyl-L-lysyl-[protein] + malonyl-CoA. It participates in lipid metabolism; malonyl-CoA biosynthesis; malonyl-CoA from acetyl-CoA: step 1/1. Component of the acetyl coenzyme A carboxylase (ACC) complex. Biotin carboxylase (BC) catalyzes the carboxylation of biotin on its carrier protein (BCCP) and then the CO(2) group is transferred by the transcarboxylase to acetyl-CoA to form malonyl-CoA. The chain is Acetyl-coenzyme A carboxylase carboxyl transferase subunit beta from Haemophilus influenzae (strain PittEE).